A 606-amino-acid chain; its full sequence is MPSSVTALGQARSSGPGMAPSACCCSPAALQRRLPILAWLPSYSLQWLKMDFVAGLSVGLTAIPQALAYAEVAGLPPQYGLYSAFMGCFVYFFLGTSRDVTLGPTAIMSLLVSFYTFHEPAYAVLLAFLSGCIQLAMGVLRLGFLLDFISYPVIKGFTSAAAVTIGFGQIKNLLGLQNIPRPFFLQVYHTFLRIAETRVGDAVLGLVCMLLLLVLKLMRDHVPPVHPEMPPGVRLSRGLVWAATTARNALVVSFAALVAYSFEVTGYQPFILTGETAEGLPPVRIPPFSVTTANGTISFTEMVQDMGAGLAVVPLMGLLESIAVAKAFASQNNYRIDANQELLAIGLTNMLGSLVSSYPVTGSFGRTAVNAQSGVCTPAGGLVTGVLVLLSLDYLTSLFYYIPKSALAAVIIMAVAPLFDTKIFRTLWRVKRLDLLPLCVTFLLCFWEVQYGILAGALVSLLMLLHSAARPETKVSEGPVLVLQPASGLSFPAMEALREEILSRALEVSPPRCLVLECTHVCSIDYTVVLGLGELLQDFQKQGVALAFVGLQVPVLRVLLSADLKGFQYFSTLEEAEKHLRQEPGTQPYNIREDSILDQKVALLKA.

Residues 1 to 51 (MPSSVTALGQARSSGPGMAPSACCCSPAALQRRLPILAWLPSYSLQWLKMD) are Extracellular-facing. Residues 52–72 (FVAGLSVGLTAIPQALAYAEV) traverse the membrane as a helical segment. A73 is a topological domain (cytoplasmic). Residues 74 to 94 (GLPPQYGLYSAFMGCFVYFFL) traverse the membrane as a helical segment. Residues 95 to 100 (GTSRDV) are Extracellular-facing. A helical membrane pass occupies residues 101–117 (TLGPTAIMSLLVSFYTF). Residues 118 to 119 (HE) lie on the Cytoplasmic side of the membrane. A helical transmembrane segment spans residues 120-140 (PAYAVLLAFLSGCIQLAMGVL). The Extracellular portion of the chain corresponds to 141–147 (RLGFLLD). Residues 148–168 (FISYPVIKGFTSAAAVTIGFG) traverse the membrane as a helical segment. Topologically, residues 169–197 (QIKNLLGLQNIPRPFFLQVYHTFLRIAET) are cytoplasmic. Residues 198–218 (RVGDAVLGLVCMLLLLVLKLM) form a helical membrane-spanning segment. Over 219–250 (RDHVPPVHPEMPPGVRLSRGLVWAATTARNAL) the chain is Extracellular. A helical transmembrane segment spans residues 251–271 (VVSFAALVAYSFEVTGYQPFI). Residues 272–307 (LTGETAEGLPPVRIPPFSVTTANGTISFTEMVQDMG) lie on the Cytoplasmic side of the membrane. The helical transmembrane segment at 308 to 328 (AGLAVVPLMGLLESIAVAKAF) threads the bilayer. Residues 329 to 341 (ASQNNYRIDANQE) lie on the Extracellular side of the membrane. A helical transmembrane segment spans residues 342–362 (LLAIGLTNMLGSLVSSYPVTG). Residues 363–374 (SFGRTAVNAQSG) lie on the Cytoplasmic side of the membrane. Residues 375–395 (VCTPAGGLVTGVLVLLSLDYL) traverse the membrane as a helical segment. Residues 396–398 (TSL) are Extracellular-facing. The chain crosses the membrane as a helical span at residues 399–419 (FYYIPKSALAAVIIMAVAPLF). Topologically, residues 420-441 (DTKIFRTLWRVKRLDLLPLCVT) are cytoplasmic. A helical transmembrane segment spans residues 442 to 462 (FLLCFWEVQYGILAGALVSLL). Residues 463 to 606 (MLLHSAARPE…LDQKVALLKA (144 aa)) are Extracellular-facing. The STAS domain occupies 470–584 (RPETKVSEGP…EAEKHLRQEP (115 aa)).

The protein belongs to the SLC26A/SulP transporter (TC 2.A.53) family. As to expression, detected in all tissues tested with highest expression observed in brain, kidney, HEVEC and placenta and lowest in pancreas, skeletal muscle, liver, lung and heart.

It localises to the cell membrane. The protein localises to the lysosome membrane. The protein resides in the apical cell membrane. It is found in the basolateral cell membrane. It carries out the reaction hydrogencarbonate(in) + chloride(out) = hydrogencarbonate(out) + chloride(in). The catalysed reaction is sulfate(in) + H(+)(in) = sulfate(out) + H(+)(out). It catalyses the reaction oxalate(in) + chloride(out) = oxalate(out) + chloride(in). Its function is as follows. Sodium-independent anion exchanger mediating bicarbonate, chloride, sulfate and oxalate transport. Exhibits sodium-independent sulfate anion transporter activity that may cooperate with SLC26A2 to mediate DIDS-sensitive sulfate uptake into high endothelial venules endothelial cells (HEVEC). In the kidney, mediates chloride-bicarbonate exchange, facilitating V-ATPase-mediated acid secretion. May function as a chloride channel, playing an important role in moderating chloride homeostasis and neuronal activity in the cerebellum. The polypeptide is Sodium-independent sulfate anion transporter (Homo sapiens (Human)).